The primary structure comprises 839 residues: Capsid-associated protein Vp91 (839 aa).

Residues 1–23 (MMSGVMLLVFAIFLIIAFTLIYL) form the signal peptide. The C2HC BV-type zinc-finger motif lies at 148 to 197 (CVPVPPCDNKPAGRYPMDERLLDTLVLNQHLDKDYSSNEHLYHPTFYLRC). Disulfide bonds link cysteine 208/cysteine 221 and cysteine 261/cysteine 274. Asparagine 211 carries N-linked (GlcNAc...) asparagine; by host glycosylation. Positions 224–282 (NELCENRPDGYILSYFPSNLLVNQFMQCVSGRHVVRECPANKIFDRNLMSCVEAHPCTF) constitute a Chitin-binding type-2 domain. N-linked (GlcNAc...) asparagine; by host glycans are attached at residues asparagine 306, asparagine 337, asparagine 613, asparagine 619, and asparagine 639. Disordered regions lie at residues 624–644 (SPVF…SISP) and 659–690 (EPDG…LPSP). A compositionally biased stretch (pro residues) spans 667 to 678 (APPPTAPPPPSE).

The protein resides in the virion. Functionally, probable capsid-associated protein. In Bombyx mori nuclear polyhedrosis virus (BmNPV), this protein is Capsid-associated protein Vp91 (p95).